The chain runs to 468 residues: Cell division protein FtsA (468 aa).

The segment at 416-468 (NKKDTHENEVESSDEEIYQSEDNHQEHKQNHEHVQDKDKEESKFKKLMKSLFE) is disordered. The span at 425–434 (VESSDEEIYQ) shows a compositional bias: acidic residues. Residues 436-459 (EDNHQEHKQNHEHVQDKDKEESKF) are compositionally biased toward basic and acidic residues.

The protein belongs to the FtsA/MreB family. In terms of assembly, self-interacts. Interacts with FtsZ.

The protein localises to the cell membrane. In terms of biological role, cell division protein that is involved in the assembly of the Z ring. May serve as a membrane anchor for the Z ring. The sequence is that of Cell division protein FtsA from Staphylococcus aureus (strain MRSA252).